Reading from the N-terminus, the 363-residue chain is Probable dual-specificity RNA methyltransferase RlmN (363 aa).

Glutamate 106 (proton acceptor) is an active-site residue. One can recognise a Radical SAM core domain in the interval 112-345; the sequence is HEYGNSVCVT…VTIRREQGHD (234 aa). Cysteine 119 and cysteine 350 are disulfide-bonded. Positions 126, 130, and 133 each coordinate [4Fe-4S] cluster. Residues 176–177, serine 208, 231–233, and asparagine 307 contribute to the S-adenosyl-L-methionine site; these read GE and SLH. Cysteine 350 serves as the catalytic S-methylcysteine intermediate.

The protein belongs to the radical SAM superfamily. RlmN family. Requires [4Fe-4S] cluster as cofactor.

It is found in the cytoplasm. The enzyme catalyses adenosine(2503) in 23S rRNA + 2 reduced [2Fe-2S]-[ferredoxin] + 2 S-adenosyl-L-methionine = 2-methyladenosine(2503) in 23S rRNA + 5'-deoxyadenosine + L-methionine + 2 oxidized [2Fe-2S]-[ferredoxin] + S-adenosyl-L-homocysteine. It carries out the reaction adenosine(37) in tRNA + 2 reduced [2Fe-2S]-[ferredoxin] + 2 S-adenosyl-L-methionine = 2-methyladenosine(37) in tRNA + 5'-deoxyadenosine + L-methionine + 2 oxidized [2Fe-2S]-[ferredoxin] + S-adenosyl-L-homocysteine. Functionally, specifically methylates position 2 of adenine 2503 in 23S rRNA and position 2 of adenine 37 in tRNAs. The chain is Probable dual-specificity RNA methyltransferase RlmN from Bacillus subtilis (strain 168).